The primary structure comprises 198 residues: Putative 3-methyladenine DNA glycosylase (198 aa).

This sequence belongs to the DNA glycosylase MPG family.

The sequence is that of Putative 3-methyladenine DNA glycosylase from Natranaerobius thermophilus (strain ATCC BAA-1301 / DSM 18059 / JW/NM-WN-LF).